The chain runs to 139 residues: Ribulose bisphosphate carboxylase small subunit, plasmid (139 aa).

This sequence belongs to the RuBisCO small chain family. Heterohexadecamer of 8 large and 8 small subunits.

RuBisCO catalyzes two reactions: the carboxylation of D-ribulose 1,5-bisphosphate, the primary event in carbon dioxide fixation, as well as the oxidative fragmentation of the pentose substrate. Both reactions occur simultaneously and in competition at the same active site. Although the small subunit is not catalytic it is essential for maximal activity. This is Ribulose bisphosphate carboxylase small subunit, plasmid from Cupriavidus necator (strain ATCC 17699 / DSM 428 / KCTC 22496 / NCIMB 10442 / H16 / Stanier 337) (Ralstonia eutropha).